We begin with the raw amino-acid sequence, 52 residues long: IYVRPTKDELLYCGEFRELGQPDKKCRCDGKPCTVGRCKFARGDADDKCTSA.

Positions 42 to 44 (RGD) match the Cell attachment site motif.

It belongs to the ornatin family.

It is found in the secreted. Potent inhibitor of fibrinogen interaction with platelet receptors expressed on glycoprotein IIb-IIIa complex. May prevent blood from clotting during either feeding and/or storage of ingested blood. The chain is Ornatin-C from Placobdella ornata (Turtle leech).